The following is a 414-amino-acid chain: DNA polymerase IV 1 (414 aa).

The 182-residue stretch at 8–189 (IFHIDMNSFY…LPVGEMHGVG (182 aa)) folds into the UmuC domain. Positions 12 and 108 each coordinate Mg(2+). Glu109 is an active-site residue. Positions 391–414 (LKKEESKTKGTSFNKDFFQDEKKS) are disordered.

It belongs to the DNA polymerase type-Y family. Monomer. Requires Mg(2+) as cofactor.

It localises to the cytoplasm. The enzyme catalyses DNA(n) + a 2'-deoxyribonucleoside 5'-triphosphate = DNA(n+1) + diphosphate. In terms of biological role, poorly processive, error-prone DNA polymerase involved in untargeted mutagenesis. Copies undamaged DNA at stalled replication forks, which arise in vivo from mismatched or misaligned primer ends. These misaligned primers can be extended by PolIV. Exhibits no 3'-5' exonuclease (proofreading) activity. May be involved in translesion synthesis (TSL), in conjunction with the beta clamp from PolIII. This Bacillus subtilis (strain 168) protein is DNA polymerase IV 1 (dinB1).